Here is a 29-residue protein sequence, read N- to C-terminus: Trypsin inhibitor 1 (29 aa).

3 disulfide bridges follow: Cys3–Cys20, Cys10–Cys22, and Cys16–Cys28.

This sequence belongs to the protease inhibitor I7 (squash-type serine protease inhibitor) family.

The protein localises to the secreted. Functionally, inhibits trypsin. The protein is Trypsin inhibitor 1 of Luffa aegyptiaca (Sponge gourd).